Reading from the N-terminus, the 380-residue chain is Ceramide synthase 2 (380 aa).

At 1–40 the chain is on the lumenal side; it reads MLQTLYDYFWWERLWLPVNLTWADLEDKDGRVYAKASDLY. Asparagine 19 carries N-linked (GlcNAc...) asparagine glycosylation. The helical transmembrane segment at 41–61 threads the bilayer; that stretch reads ITLPLALLFLVIRYFFELYVA. A homeobox-like region spans residues 67 to 128; it reads LLNVKEKTRL…RRRRNQDRPS (62 aa). The TLC domain occupies 131 to 332; sequence KKFREASWRF…ILRMAHKFIT (202 aa). A run of 4 helical transmembrane segments spans residues 140–160, 175–195, 209–229, and 264–284; these read FTYY…KPWF, IIPS…SLLF, QIIH…ANYV, and LFIV…PFWI. Residues 291–300 carry the Last loop motif motif; that stretch reads YPLELYPAFF. The helical transmembrane segment at 304–324 threads the bilayer; that stretch reads FFNFMMAVLQMLHIFWAYFIL. The Cytoplasmic segment spans residues 325–380; that stretch reads RMAHKFITGKLIEDERSDREETESSEGEETAAGAGAKSRLLANGHPILNNNHPKND. The interval 340–380 is disordered; it reads RSDREETESSEGEETAAGAGAKSRLLANGHPILNNNHPKND. A Phosphoserine modification is found at serine 341. Over residues 344-353 the composition is skewed to acidic residues; sequence EETESSEGEE. Phosphothreonine is present on threonine 346. Residues serine 348 and serine 349 each carry the phosphoserine modification.

In terms of assembly, interacts with ATP6V0C, ASGR1, ASGR2 and SLC22A1/OCT1. Interacts with ELOV1, HSD17B12 and TECR. Interacts with NDUFS2. Interacts with PAQR4; the interaction regulates the stability and activity of CERS2 and is inhibited in presence of ceramides. Acetylated. Deacetylation by SIRT3 increases enzyme activity and promotes mitochondrial ceramide accumulation. Post-translationally, phosphorylated at the C-terminus by CK2, leading to increase the ceramide synthase activity. Broadly expressed, with highest levels in liver and kidney. In brain is detected in neurons, oligodentrocytes, ependymal cells and epithelial cells of the choroid plexus. In kidney is detected in collecting ducts and to a lesser degree in proximal tubules.

Its subcellular location is the endoplasmic reticulum membrane. The catalysed reaction is a very long-chain fatty acyl-CoA + a sphingoid base = an N-(very-long-chain fatty acyl)-sphingoid base + CoA + H(+). It catalyses the reaction docosanoyl-CoA + sphinganine = N-docosanoylsphinganine + CoA + H(+). The enzyme catalyses tetracosanoyl-CoA + sphinganine = N-tetracosanoylsphinganine + CoA + H(+). It carries out the reaction hexacosanoyl-CoA + sphinganine = N-hexacosanoylsphinganine + CoA + H(+). The catalysed reaction is (15Z)-tetracosenoyl-CoA + sphinganine = N-(15Z-tetracosenoyl)-sphinganine + CoA + H(+). It catalyses the reaction 2-hydroxytetracosanoyl-CoA + sphinganine = N-(2-hydroxytetracosanoyl)-sphinganine + CoA + H(+). The enzyme catalyses 2-hydroxydocosanoyl-CoA + sphinganine = N-(2-hydroxydocosanoyl)-sphinganine + CoA + H(+). It carries out the reaction 2-hydroxytetracosenoyl-CoA + sphinganine = N-(2-hydroxytetracosenoyl)-sphinganine + CoA + H(+). The catalysed reaction is tetracosenoyl-CoA + sphinganine = an N-tetracosenoylsphinganine + CoA + H(+). It catalyses the reaction hexacosenoyl-CoA + sphinganine = N-hexacosenoylsphinganine + CoA + H(+). The enzyme catalyses tetracosanoyl-CoA + sphing-4-enine = N-tetracosanoyl-sphing-4-enine + CoA + H(+). It carries out the reaction tetracosenoyl-CoA + sphing-4-enine = N-(tetracosenoyl)-sphing-4-enine + CoA + H(+). The catalysed reaction is heptadecasphing-4-enine + tetracosanoyl-CoA = N-tetracosanoyl-heptadecasphing-4-enine + CoA + H(+). It catalyses the reaction a fatty acyl-CoA + sphing-4-enine = an N-acylsphing-4-enine + CoA + H(+). The enzyme catalyses sphing-4-enine + hexadecanoyl-CoA = N-hexadecanoylsphing-4-enine + CoA + H(+). It carries out the reaction sphing-4-enine + octadecanoyl-CoA = N-octadecanoylsphing-4-enine + CoA + H(+). The catalysed reaction is eicosanoyl-CoA + sphing-4-enine = N-eicosanoyl-sphing-4-enine + CoA + H(+). It catalyses the reaction sphinganine + hexadecanoyl-CoA = N-hexadecanoylsphinganine + CoA + H(+). The enzyme catalyses sphinganine + octadecanoyl-CoA = N-(octadecanoyl)-sphinganine + CoA + H(+). It carries out the reaction sphinganine + (9Z)-octadecenoyl-CoA = N-(9Z-octadecenoyl)-sphinganine + CoA + H(+). The catalysed reaction is eicosanoyl-CoA + sphinganine = N-eicosanoylsphinganine + CoA + H(+). Its pathway is lipid metabolism; sphingolipid metabolism. Its activity is regulated as follows. Ceramide synthase activity is inhibited by sphingosine-1-phosphate. Ceramide synthase that catalyzes the transfer of the acyl chain from acyl-CoA to a sphingoid base, with high selectivity toward very-long-chain fatty acyl-CoA (chain length C22-C27). N-acylates sphinganine and sphingosine bases to form dihydroceramides and ceramides in de novo synthesis and salvage pathways, respectively. Plays a non-redundant role in the synthesis of ceramides with very-long-chain fatty acids in kidney, liver and brain. Regulates the abundance of myelin-specific sphingolipids galactosylceramide and sulfatide that affects myelin sheath architecture and motor neuron functions. The protein is Ceramide synthase 2 of Mus musculus (Mouse).